The primary structure comprises 821 residues: Centrosomal protein of 95 kDa (821 aa).

3 disordered regions span residues Thr310–Lys354, Ala390–His474, and Lys514–Ala550. Basic and acidic residues-rich tracts occupy residues Glu325–Asn340 and Ala390–Asn410. Positions Arg427 to Tyr441 are enriched in basic residues. Phosphoserine is present on residues Ser445, Ser447, and Ser449. 2 coiled-coil regions span residues Leu578–Glu627 and Leu695–Ala789.

The protein resides in the cytoplasm. It is found in the cytoskeleton. Its subcellular location is the microtubule organizing center. The protein localises to the centrosome. It localises to the spindle pole. This Rattus norvegicus (Rat) protein is Centrosomal protein of 95 kDa (Cep95).